The sequence spans 1244 residues: Structural polyprotein (1244 aa).

Residues 1–113 (MNSVFYNPFG…GKRQRTALKF (113 aa)) form a disordered region. The segment covering 35–44 (GLTTQIQQLT) has biased composition (polar residues). The host transcription inhibition stretch occupies residues 35-69 (GLTTQIQQLTRAVRALVLDNATRRQRPAPRTRPRK). Residues 57–81 (RRQRPAPRTRPRKPKTQKPKPKKQN) show a composition bias toward basic residues. The Nuclear localization signal motif lies at 62–103 (APRTRPRKPKTQKPKPKKQNQKPPQQQKKGKNQPQQPKKPKP). The segment covering 82 to 97 (QKPPQQQKKGKNQPQQ) has biased composition (low complexity). A binding to the viral RNA region spans residues 85–118 (PQQQKKGKNQPQQPKKPKPGKRQRTALKFEADRT). Positions 99 to 109 (KKPKPGKRQRT) are enriched in basic residues. The tract at residues 103-117 (PGKRQRTALKFEADR) is ribosome-binding. The Peptidase S3 domain maps to 117–267 (RTFVGKNEDG…KTTHEDTVEW (151 aa)). The active-site Charge relay system is histidine 144. The Nuclear export signal motif lies at 149–159 (IDHPALAKLKF). Residues 160–165 (TKSSSY) form an interaction with spike glycoprotein E2 region. The active-site Charge relay system is the aspartate 166. A dimerization of the capsid protein region spans residues 188 to 198 (PEVFYNWHHGA). The active-site Charge relay system is the serine 218. Positions 224–228 (DNSGK) are dimerization of the capsid protein. An interaction with spike glycoprotein E2 region spans residues 252 to 256 (KKGAA). The interval 268–280 (SRAITAMCILQNV) is functions as an uncleaved signal peptide for the precursor of protein E3/E2. The Extracellular segment spans residues 268-696 (SRAITAMCIL…HYYHLYPFYT (429 aa)). An N-linked (GlcNAc...) asparagine; by host glycan is attached at asparagine 279. 4 cysteine pairs are disulfide-bonded: cysteine 284/cysteine 290, cysteine 481/cysteine 595, cysteine 530/cysteine 555, and cysteine 532/cysteine 549. Asparagine 525 carries an N-linked (GlcNAc...) asparagine; by host glycan. Asparagine 647 carries an N-linked (GlcNAc...) asparagine; by host glycan. A helical transmembrane segment spans residues 697 to 717 (VTVLSGMGLAICAGLVISILC). The Cytoplasmic segment spans residues 718–751 (CCKARRDCLTPYQLAPNATVPFLVTLCCCFQRTS). The interaction with the capsid protein stretch occupies residues 720–724 (KARRD). 3 S-palmitoyl cysteine; by host lipidation sites follow: cysteine 725, cysteine 745, and cysteine 746. Cysteine 725 and cysteine 746 are disulfide-bonded. Over 752 to 764 (ADEFTDTMGYLWQ) the chain is Extracellular. The next 2 membrane-spanning stretches (helical) occupy residues 765 to 785 (HSQT…ITLV) and 786 to 805 (RCCS…NKAD). Over 806–1218 (AYEHTITVPN…KTSWNWITAL (413 aa)) the chain is Extracellular. Intrachain disulfides connect cysteine 855/cysteine 920, cysteine 868/cysteine 900, cysteine 869/cysteine 902, and cysteine 874/cysteine 884. The interval 890-907 (VYPFLWGGAQCFCDSENS) is E1 fusion peptide loop. Residues asparagine 945 and asparagine 1051 are each glycosylated (N-linked (GlcNAc...) asparagine; by host). 4 disulfides stabilise this stretch: cysteine 1065–cysteine 1077, cysteine 1106–cysteine 1181, cysteine 1111–cysteine 1185, and cysteine 1133–cysteine 1175. The helical transmembrane segment at 1219-1239 (MGGISSIAAIAAIVLVIALVF) threads the bilayer. Over 1240 to 1244 (TAQHR) the chain is Cytoplasmic.

As to quaternary structure, homodimer. Homomultimer. Interacts with host karyopherin KPNA4; this interaction allows the nuclear import of the viral capsid protein. Interacts with spike glycoprotein E2. Interacts with host IRAK1; the interaction leads to inhibition of IRAK1-dependent signaling. In terms of assembly, the precursor of protein E3/E2 and E1 form a heterodimer shortly after synthesis. The precursor of protein E3/E2 and E1 form a heterodimer shortly after synthesis. Processing of the precursor of protein E3/E2 into E2 and E3 results in a heterodimer of the spike glycoproteins E2 and E1. Spike at virion surface are constituted of a trimer of E2-E1 heterodimers. After target cell attachment and endocytosis, E1 change conformation to form homotrimers. Interacts with 6K protein. As to quaternary structure, interacts with spike glycoprotein E1. Processing of the precursor of protein E3/E2 into E2 and E3 results in a heterodimer of the spike glycoproteins E2 and E1. Spike at virion surface are constituted of a trimer of E2-E1 heterodimers. Interacts with 6K protein. In terms of assembly, oligomer. Interacts with spike glycoprotein E1. Interacts with spike glycoprotein E2. In terms of processing, structural polyprotein: Specific enzymatic cleavages in vivo yield mature proteins. Capsid protein is auto-cleaved during polyprotein translation, unmasking a signal peptide at the N-terminus of the precursor of E3/E2. The remaining polyprotein is then targeted to the host endoplasmic reticulum, where host signal peptidase cleaves it into pE2, 6K and E1 proteins. pE2 is further processed to mature E3 and E2 by host furin in trans-Golgi vesicle. Post-translationally, palmitoylated via thioester bonds. These palmitoylations may induce disruption of the C-terminus transmembrane. This would result in the reorientation of E2 C-terminus from lumenal to cytoplasmic side. N-glycosylated. In terms of processing, palmitoylated via thioester bonds.

The protein localises to the virion. It localises to the host cytoplasm. It is found in the host cell membrane. The protein resides in the host nucleus. Its subcellular location is the virion membrane. The protein localises to the host Golgi apparatus. It localises to the host trans-Golgi network. It is found in the host endoplasmic reticulum. It carries out the reaction Autocatalytic release of the core protein from the N-terminus of the togavirus structural polyprotein by hydrolysis of a -Trp-|-Ser- bond.. Forms an icosahedral capsid with a T=4 symmetry composed of 240 copies of the capsid protein surrounded by a lipid membrane through which penetrate 80 spikes composed of trimers of E1-E2 heterodimers. The capsid protein binds to the viral RNA genome at a site adjacent to a ribosome binding site for viral genome translation following genome release. Possesses a protease activity that results in its autocatalytic cleavage from the nascent structural protein. Following its self-cleavage, the capsid protein transiently associates with ribosomes, and within several minutes the protein binds to viral RNA and rapidly assembles into icosahedric core particles. The resulting nucleocapsid eventually associates with the cytoplasmic domain of the spike glycoprotein E2 at the cell membrane, leading to budding and formation of mature virions. In case of infection, new virions attach to target cells and after clathrin-mediated endocytosis their membrane fuses with the host endosomal membrane. This leads to the release of the nucleocapsid into the cytoplasm, followed by an uncoating event necessary for the genomic RNA to become accessible. The uncoating might be triggered by the interaction of capsid proteins with ribosomes. Binding of ribosomes would release the genomic RNA since the same region is genomic RNA-binding and ribosome-binding. Specifically inhibits interleukin-1 receptor-associated kinase 1/IRAK1-dependent signaling during viral entry, representing a means by which the alphaviruses may evade innate immune detection and activation prior to viral gene expression. In terms of biological role, provides the signal sequence for the translocation of the precursor of protein E3/E2 to the host endoplasmic reticulum. Furin-cleaved E3 remains associated with spike glycoprotein E1 and mediates pH protection of the latter during the transport via the secretory pathway. After virion release from the host cell, the assembly protein E3 is gradually released in the extracellular space. Its function is as follows. Plays a role in viral attachment to target host cell, by binding to the cell receptor. Synthesized as a p62 precursor which is processed by furin at the cell membrane just before virion budding, giving rise to E2-E1 heterodimer. The p62-E1 heterodimer is stable, whereas E2-E1 is unstable and dissociate at low pH. p62 is processed at the last step, presumably to avoid E1 fusion activation before its final export to cell surface. E2 C-terminus contains a transitory transmembrane that would be disrupted by palmitoylation, resulting in reorientation of the C-terminal tail from lumenal to cytoplasmic side. This step is critical since E2 C-terminus is involved in budding by interacting with capsid proteins. This release of E2 C-terminus in cytoplasm occurs lately in protein export, and precludes premature assembly of particles at the endoplasmic reticulum membrane. Functionally, acts as a viroporin that participates in virus glycoprotein processing and transport to the plasma membrane, cell permeabilization and budding of viral particles. Disrupts the calcium homeostasis of the cell, probably at the endoplasmic reticulum level. This leads to cytoplasmic calcium elevation. Because of its lipophilic properties, the 6K protein is postulated to influence the selection of lipids that interact with the transmembrane domains of the glycoproteins, which, in turn, affects the deformability of the bilayer required for the extreme curvature that occurs as budding proceeds. Present in low amount in virions, about 3% compared to viral glycoproteins. Class II viral fusion protein. Fusion activity is inactive as long as E1 is bound to E2 in mature virion. After virus attachment to target cell and endocytosis, acidification of the endosome induce dissociation of E1/E2 heterodimer and concomitant trimerization of the E1 subunits. This E1 trimer is fusion active, and promotes release of viral nucleocapsid in cytoplasm after endosome and viral membrane fusion. Efficient fusion requires the presence of cholesterol and sphingolipid in the target membrane. The polypeptide is Structural polyprotein (Aedes (AURAV)).